Reading from the N-terminus, the 746-residue chain is Polyribonucleotide nucleotidyltransferase (746 aa).

Asp520 and Asp526 together coordinate Mg(2+). Positions 586 to 648 (PRIITVKVPV…EAARAAVNAI (63 aa)) constitute a KH domain. Residues 657 to 729 (GERYLGTVVK…PRGKLSLVPV (73 aa)) form the S1 motif domain.

Belongs to the polyribonucleotide nucleotidyltransferase family. Requires Mg(2+) as cofactor.

Its subcellular location is the cytoplasm. The catalysed reaction is RNA(n+1) + phosphate = RNA(n) + a ribonucleoside 5'-diphosphate. Its function is as follows. Involved in mRNA degradation. Catalyzes the phosphorolysis of single-stranded polyribonucleotides processively in the 3'- to 5'-direction. The polypeptide is Polyribonucleotide nucleotidyltransferase (Kineococcus radiotolerans (strain ATCC BAA-149 / DSM 14245 / SRS30216)).